The sequence spans 177 residues: Protein GrpE (177 aa).

Belongs to the GrpE family. In terms of assembly, homodimer.

The protein resides in the cytoplasm. Its function is as follows. Participates actively in the response to hyperosmotic and heat shock by preventing the aggregation of stress-denatured proteins, in association with DnaK and GrpE. It is the nucleotide exchange factor for DnaK and may function as a thermosensor. Unfolded proteins bind initially to DnaJ; upon interaction with the DnaJ-bound protein, DnaK hydrolyzes its bound ATP, resulting in the formation of a stable complex. GrpE releases ADP from DnaK; ATP binding to DnaK triggers the release of the substrate protein, thus completing the reaction cycle. Several rounds of ATP-dependent interactions between DnaJ, DnaK and GrpE are required for fully efficient folding. In Thermus thermophilus (strain ATCC BAA-163 / DSM 7039 / HB27), this protein is Protein GrpE.